The primary structure comprises 536 residues: Aminopeptidase (536 aa).

The first 24 residues, 1–24 (MSNKNNLRYALGALALSVSAASLA), serve as a signal peptide directing secretion. The PA domain maps to 152–255 (AGDVTAKVVP…ATYDNGVAWS (104 aa)). Threonine 196 is subject to Phosphothreonine. Zn(2+) contacts are provided by histidine 296 and aspartate 308. Glutamate 340 acts as the Proton acceptor in catalysis. Zn(2+) contacts are provided by glutamate 341, aspartate 369, and histidine 467. A disulfide bond links cysteine 465 and cysteine 470.

Belongs to the peptidase M28 family. M28A subfamily. Requires Zn(2+) as cofactor.

It is found in the secreted. The catalysed reaction is Release of an N-terminal amino acid, Xaa-|-Yaa-, in which Xaa is preferably Leu, but may be other amino acids including Pro although not Arg or Lys, and Yaa may be Pro. Amino acid amides and methyl esters are also readily hydrolyzed, but rates on arylamides are exceedingly low.. Functionally, a secreted aminopeptidase. Acts on free N-terminal amino groups with a very strong preference for Leu in the first position. The protein is Aminopeptidase of Pseudomonas aeruginosa (strain UCBPP-PA14).